A 104-amino-acid polypeptide reads, in one-letter code: MLTEITFFERFEHDILMGKKTITLRNEAESHVIPGQILPVSTFETHRWFCDIQVLEVTPITLSGLTTLHAQQENMTLAELRLVIAEIYPDLEQLYMIRFKVLTK.

The 96-residue stretch at 6-101 (TFFERFEHDI…EQLYMIRFKV (96 aa)) folds into the ASCH domain. Lys20 serves as the catalytic Proton acceptor. Residue Thr23 is the Nucleophile of the active site. Catalysis depends on Glu73, which acts as the Proton donor.

Belongs to the N(4)-acetylcytidine amidohydrolase family.

The catalysed reaction is N(4)-acetylcytidine + H2O = cytidine + acetate + H(+). It catalyses the reaction N(4)-acetyl-2'-deoxycytidine + H2O = 2'-deoxycytidine + acetate + H(+). The enzyme catalyses N(4)-acetylcytosine + H2O = cytosine + acetate + H(+). Functionally, catalyzes the hydrolysis of N(4)-acetylcytidine (ac4C). This chain is N(4)-acetylcytidine amidohydrolase, found in Shewanella oneidensis (strain ATCC 700550 / JCM 31522 / CIP 106686 / LMG 19005 / NCIMB 14063 / MR-1).